The sequence spans 227 residues: Cytochrome c oxidase subunit 2 (227 aa).

Residues 1 to 14 are Mitochondrial intermembrane-facing; the sequence is MAYPFELGFQDATS. The helical transmembrane segment at 15–45 threads the bilayer; that stretch reads PIMEELLHFHDHTLMIVFLISSLVLYIISLM. Residues 46–59 are Mitochondrial matrix-facing; it reads LTTKLTHTSTMDAQ. A helical membrane pass occupies residues 60 to 87; sequence EVETIWTILPAIILILIALPSLRVLYMM. At 88–227 the chain is on the mitochondrial intermembrane side; sequence DEINDPSLTV…HFENWSSSML (140 aa). The Cu cation site is built by His-161, Cys-196, Glu-198, Cys-200, His-204, and Met-207. Glu-198 contacts Mg(2+).

The protein belongs to the cytochrome c oxidase subunit 2 family. As to quaternary structure, component of the cytochrome c oxidase (complex IV, CIV), a multisubunit enzyme composed of 14 subunits. The complex is composed of a catalytic core of 3 subunits MT-CO1, MT-CO2 and MT-CO3, encoded in the mitochondrial DNA, and 11 supernumerary subunits COX4I, COX5A, COX5B, COX6A, COX6B, COX6C, COX7A, COX7B, COX7C, COX8 and NDUFA4, which are encoded in the nuclear genome. The complex exists as a monomer or a dimer and forms supercomplexes (SCs) in the inner mitochondrial membrane with NADH-ubiquinone oxidoreductase (complex I, CI) and ubiquinol-cytochrome c oxidoreductase (cytochrome b-c1 complex, complex III, CIII), resulting in different assemblies (supercomplex SCI(1)III(2)IV(1) and megacomplex MCI(2)III(2)IV(2)). Found in a complex with TMEM177, COA6, COX18, COX20, SCO1 and SCO2. Interacts with TMEM177 in a COX20-dependent manner. Interacts with COX20. Interacts with COX16. Cu cation serves as cofactor.

Its subcellular location is the mitochondrion inner membrane. It carries out the reaction 4 Fe(II)-[cytochrome c] + O2 + 8 H(+)(in) = 4 Fe(III)-[cytochrome c] + 2 H2O + 4 H(+)(out). Component of the cytochrome c oxidase, the last enzyme in the mitochondrial electron transport chain which drives oxidative phosphorylation. The respiratory chain contains 3 multisubunit complexes succinate dehydrogenase (complex II, CII), ubiquinol-cytochrome c oxidoreductase (cytochrome b-c1 complex, complex III, CIII) and cytochrome c oxidase (complex IV, CIV), that cooperate to transfer electrons derived from NADH and succinate to molecular oxygen, creating an electrochemical gradient over the inner membrane that drives transmembrane transport and the ATP synthase. Cytochrome c oxidase is the component of the respiratory chain that catalyzes the reduction of oxygen to water. Electrons originating from reduced cytochrome c in the intermembrane space (IMS) are transferred via the dinuclear copper A center (CU(A)) of subunit 2 and heme A of subunit 1 to the active site in subunit 1, a binuclear center (BNC) formed by heme A3 and copper B (CU(B)). The BNC reduces molecular oxygen to 2 water molecules using 4 electrons from cytochrome c in the IMS and 4 protons from the mitochondrial matrix. This is Cytochrome c oxidase subunit 2 (MT-CO2) from Sciurus carolinensis (Eastern gray squirrel).